We begin with the raw amino-acid sequence, 159 residues long: Phosphopantetheine adenylyltransferase (159 aa).

Substrate is bound at residue threonine 10. ATP is bound by residues threonine 10–phenylalanine 11 and histidine 18. Substrate contacts are provided by lysine 42, methionine 74, and arginine 88. Residues glycine 89 to arginine 91, glutamate 99, and tryptophan 124 to serine 130 each bind ATP.

This sequence belongs to the bacterial CoaD family. In terms of assembly, homohexamer. It depends on Mg(2+) as a cofactor.

Its subcellular location is the cytoplasm. The enzyme catalyses (R)-4'-phosphopantetheine + ATP + H(+) = 3'-dephospho-CoA + diphosphate. The protein operates within cofactor biosynthesis; coenzyme A biosynthesis; CoA from (R)-pantothenate: step 4/5. Functionally, reversibly transfers an adenylyl group from ATP to 4'-phosphopantetheine, yielding dephospho-CoA (dPCoA) and pyrophosphate. This chain is Phosphopantetheine adenylyltransferase, found in Cronobacter sakazakii (strain ATCC BAA-894) (Enterobacter sakazakii).